A 450-amino-acid polypeptide reads, in one-letter code: Phosphoglucosamine mutase (450 aa).

Ser101 (phosphoserine intermediate) is an active-site residue. Mg(2+) contacts are provided by Ser101, Asp241, Asp243, and Asp245. Ser101 is modified (phosphoserine).

This sequence belongs to the phosphohexose mutase family. Mg(2+) serves as cofactor. In terms of processing, activated by phosphorylation.

The catalysed reaction is alpha-D-glucosamine 1-phosphate = D-glucosamine 6-phosphate. In terms of biological role, catalyzes the conversion of glucosamine-6-phosphate to glucosamine-1-phosphate. In Listeria innocua serovar 6a (strain ATCC BAA-680 / CLIP 11262), this protein is Phosphoglucosamine mutase.